We begin with the raw amino-acid sequence, 98 residues long: NADH-ubiquinone oxidoreductase chain 4L (98 aa).

The next 3 membrane-spanning stretches (helical) occupy residues 2-22 (SLVY…LLMF), 29-49 (SLLC…ILIL), and 61-81 (IIML…LVMV).

The protein belongs to the complex I subunit 4L family. In terms of assembly, core subunit of respiratory chain NADH dehydrogenase (Complex I) which is composed of 45 different subunits.

The protein resides in the mitochondrion inner membrane. The catalysed reaction is a ubiquinone + NADH + 5 H(+)(in) = a ubiquinol + NAD(+) + 4 H(+)(out). Its function is as follows. Core subunit of the mitochondrial membrane respiratory chain NADH dehydrogenase (Complex I) which catalyzes electron transfer from NADH through the respiratory chain, using ubiquinone as an electron acceptor. Part of the enzyme membrane arm which is embedded in the lipid bilayer and involved in proton translocation. The sequence is that of NADH-ubiquinone oxidoreductase chain 4L (MT-ND4L) from Galemys pyrenaicus (Iberian desman).